The following is a 490-amino-acid chain: Aspartyl/glutamyl-tRNA(Asn/Gln) amidotransferase subunit B (490 aa).

The protein belongs to the GatB/GatE family. GatB subfamily. In terms of assembly, heterotrimer of A, B and C subunits.

It catalyses the reaction L-glutamyl-tRNA(Gln) + L-glutamine + ATP + H2O = L-glutaminyl-tRNA(Gln) + L-glutamate + ADP + phosphate + H(+). The enzyme catalyses L-aspartyl-tRNA(Asn) + L-glutamine + ATP + H2O = L-asparaginyl-tRNA(Asn) + L-glutamate + ADP + phosphate + 2 H(+). In terms of biological role, allows the formation of correctly charged Asn-tRNA(Asn) or Gln-tRNA(Gln) through the transamidation of misacylated Asp-tRNA(Asn) or Glu-tRNA(Gln) in organisms which lack either or both of asparaginyl-tRNA or glutaminyl-tRNA synthetases. The reaction takes place in the presence of glutamine and ATP through an activated phospho-Asp-tRNA(Asn) or phospho-Glu-tRNA(Gln). This Prochlorococcus marinus (strain MIT 9515) protein is Aspartyl/glutamyl-tRNA(Asn/Gln) amidotransferase subunit B.